The sequence spans 439 residues: Cobyrinate a,c-diamide synthase (439 aa).

The segment at 214-235 (ETARAPPEVATTERNTGDSPAD) is disordered. The region spanning 237-428 (RVAVAQDSAF…CHCHGESGAF (192 aa)) is the GATase cobBQ-type domain. Cysteine 317 acts as the Nucleophile in catalysis.

It belongs to the CobB/CbiA family. Mg(2+) serves as cofactor.

It catalyses the reaction cob(II)yrinate + 2 L-glutamine + 2 ATP + 2 H2O = cob(II)yrinate a,c diamide + 2 L-glutamate + 2 ADP + 2 phosphate + 2 H(+). It functions in the pathway cofactor biosynthesis; adenosylcobalamin biosynthesis; cob(II)yrinate a,c-diamide from sirohydrochlorin (anaerobic route): step 10/10. Its function is as follows. Catalyzes the ATP-dependent amidation of the two carboxylate groups at positions a and c of cobyrinate, using either L-glutamine or ammonia as the nitrogen source. This Haloarcula marismortui (strain ATCC 43049 / DSM 3752 / JCM 8966 / VKM B-1809) (Halobacterium marismortui) protein is Cobyrinate a,c-diamide synthase.